Here is a 186-residue protein sequence, read N- to C-terminus: Phosphoprotein p30 (186 aa).

This sequence belongs to the asfivirus phosphoprotein p30 family. As to quaternary structure, oligomer. Interacts with host HNRNPK. Post-translationally, phosphorylated on serine residues in the 115 N-terminal amino acids.

It localises to the host cytoplasm. The protein resides in the host nucleus. Its subcellular location is the virion. In terms of biological role, modifies the subcellular distribution of heterogeneous nuclear ribonucleoprotein K (HNRNPK) and may contribute to modulate HNRNPK functions related to processing and export of mRNAs during ASFV infection. Necessary for virus internalization. This African swine fever virus (isolate Tick/South Africa/Pretoriuskop Pr4/1996) (ASFV) protein is Phosphoprotein p30.